We begin with the raw amino-acid sequence, 107 residues long: Iron-sulfur cluster assembly protein CyaY (107 aa).

The protein belongs to the frataxin family.

In terms of biological role, involved in iron-sulfur (Fe-S) cluster assembly. May act as a regulator of Fe-S biogenesis. The protein is Iron-sulfur cluster assembly protein CyaY of Yersinia intermedia.